Here is a 108-residue protein sequence, read N- to C-terminus: Replication restart protein PriB (108 aa).

Positions Ile-8–Asp-108 constitute an SSB domain.

Belongs to the PriB family. In terms of assembly, homodimer. Interacts with PriA and DnaT. Component of the replication restart primosome. Primosome assembly occurs via a 'hand-off' mechanism. PriA binds to replication forks, subsequently PriB then DnaT bind; DnaT then displaces ssDNA to generate the helicase loading substrate.

In terms of biological role, involved in the restart of stalled replication forks, which reloads the replicative helicase on sites other than the origin of replication; the PriA-PriB pathway is the major replication restart pathway. During primosome assembly it facilitates complex formation between PriA and DnaT on DNA; stabilizes PriA on DNA. Stimulates the DNA unwinding activity of PriA helicase. This Haemophilus influenzae (strain ATCC 51907 / DSM 11121 / KW20 / Rd) protein is Replication restart protein PriB.